Consider the following 160-residue polypeptide: Transcriptional repressor NrdR (160 aa).

Positions 1–11 (MRCPNCNSLDT) are enriched in polar residues. Residues 1 to 20 (MRCPNCNSLDTQVKDSRPTE) are disordered. A zinc finger spans residues 3-34 (CPNCNSLDTQVKDSRPTEDSSVIRRRRVCVAC). An ATP-cone domain is found at 49 to 139 (LTVIKRNGRR…VYRNFREAKD (91 aa)).

It belongs to the NrdR family. Zn(2+) is required as a cofactor.

Its function is as follows. Negatively regulates transcription of bacterial ribonucleotide reductase nrd genes and operons by binding to NrdR-boxes. This chain is Transcriptional repressor NrdR, found in Bradyrhizobium diazoefficiens (strain JCM 10833 / BCRC 13528 / IAM 13628 / NBRC 14792 / USDA 110).